The chain runs to 635 residues: Voltage-gated potassium channel KCNC4 (635 aa).

The interval 1–24 (MISSVCVSSYRGRKSGNKPPSKTC) is disordered. Positions 1 to 28 (MISSVCVSSYRGRKSGNKPPSKTCLKEE) are inactivation gate. Over 1–226 (MISSVCVSSY…EDPYSSRAAR (226 aa)) the chain is Cytoplasmic. Phosphoserine occurs at positions 8, 9, 15, and 21. Zn(2+) contacts are provided by histidine 116, cysteine 122, cysteine 143, and cysteine 144. A disordered region spans residues 160–180 (IFESPDGGGSGAGPSDEAGDD). A helical membrane pass occupies residues 227-247 (VVAFASLFFILVSITTFCLET). 2 N-linked (GlcNAc...) asparagine glycosylation sites follow: asparagine 256 and asparagine 265. A helical transmembrane segment spans residues 278–298 (EPILTYIEGVCVLWFTLEFLV). Residues 299 to 312 (RIVCCPDTLDFVKN) are Cytoplasmic-facing. The chain crosses the membrane as a helical span at residues 313–333 (LLNIIDFVAILPFYLEVGLSG). The helical; Voltage-sensor transmembrane segment at 345-364 (FLRVVRFVRILRIFKLTRHF) threads the bilayer. Residues 365 to 380 (VGLRVLGHTLRASTNE) lie on the Cytoplasmic side of the membrane. The helical transmembrane segment at 381 to 401 (FLLLIIFLALGVLIFATMIYY) threads the bilayer. Residues threonine 436, leucine 437, glycine 438, and tyrosine 439 each contribute to the K(+) site. The Selectivity filter signature appears at 436–441 (TLGYGD). A helical membrane pass occupies residues 452–472 (VGALCALAGVLTIAMPVPVIV). At 473-635 (NNFGMYYSLA…PTAGTLFLPH (163 aa)) the chain is on the cytoplasmic side. The tract at residues 490-580 (KKRKKHVPRP…RRALRRSTTR (91 aa)) is disordered. Basic and acidic residues predominate over residues 527 to 542 (AREEGMIERKRADSKQ).

It belongs to the potassium channel family. C (Shaw) (TC 1.A.1.2) subfamily. Kv3.4/KCNC4 sub-subfamily. Homotetramer. Heterotetramer of potassium channel proteins. Post-translationally, phosphorylation of serine residues in the inactivation gate inhibits rapid channel closure.

The protein resides in the membrane. The enzyme catalyses K(+)(in) = K(+)(out). Functionally, voltage-gated potassium channel that opens in response to the voltage difference across the membrane, forming a potassium-selective channel through which potassium ions pass in accordance with their electrochemical gradient. The channel displays rapid activation and inactivation kinetics. This chain is Voltage-gated potassium channel KCNC4, found in Homo sapiens (Human).